A 171-amino-acid polypeptide reads, in one-letter code: UPF0312 protein SAOUHSC_03022 (171 aa).

Belongs to the UPF0312 family.

This Staphylococcus aureus (strain NCTC 8325 / PS 47) protein is UPF0312 protein SAOUHSC_03022.